The primary structure comprises 303 residues: D-alanine--D-alanine ligase B (303 aa).

The region spanning 103–298 (KLLWKGAGLP…YEDLCLKVLD (196 aa)) is the ATP-grasp domain. 129-184 (ERQLGLPIFVKPSTEGSSIGVTKVKQPGELRAAFEEARKYDKVVIAEQFIGGGEYT) is an ATP binding site. Positions 252, 265, and 267 each coordinate Mg(2+).

The protein belongs to the D-alanine--D-alanine ligase family. Requires Mg(2+) as cofactor. Mn(2+) is required as a cofactor.

It is found in the cytoplasm. It catalyses the reaction 2 D-alanine + ATP = D-alanyl-D-alanine + ADP + phosphate + H(+). The protein operates within cell wall biogenesis; peptidoglycan biosynthesis. Cell wall formation. This Chromobacterium violaceum (strain ATCC 12472 / DSM 30191 / JCM 1249 / CCUG 213 / NBRC 12614 / NCIMB 9131 / NCTC 9757 / MK) protein is D-alanine--D-alanine ligase B.